A 494-amino-acid polypeptide reads, in one-letter code: Ribonuclease H (494 aa).

Disordered stretches follow at residues 79–148 and 205–231; these read NRRR…APPP and RSGL…VGLR. Composition is skewed to polar residues over residues 84–100 and 131–143; these read GSTS…NQLA and PTTS…TRTS. The 217-residue stretch at 272–488 folds into the RNase H type-1 domain; the sequence is SSVPQVVYVD…ADVLAVAGAR (217 aa). Mg(2+) contacts are provided by D281, E325, D374, and D480.

The protein belongs to the RNase H family. As to quaternary structure, monomer. It depends on Mg(2+) as a cofactor.

The enzyme catalyses Endonucleolytic cleavage to 5'-phosphomonoester.. Endonuclease that specifically degrades the RNA of RNA-DNA hybrids. This chain is Ribonuclease H (RNH1), found in Crithidia fasciculata.